Reading from the N-terminus, the 686-residue chain is MKKNIKDIFKNFNIFWFCFIFLLLSLLYCLIMMEISHQHDNNKPSEIIAVLKEIKELQTKSTEESKKESKESKESKEDKTKIIKIKKFDIHETSNYGSYLIVFQWGTGNKDSFEWEKELKFPNVDQETYKEIMKICFEIIGTPIDKKDNITNLSQMITKIKEKTNLIPLQRIPYQPYFGFAPFISAVNICILIIIFYFIYNSIEKTSAQISGKNLNISRQKVLVNQQEFTFKDIAGADEEKEEMSELINFLKNPFKYEAMGARIPKGVLLYGPPGVGKTLLAKAVAGEAKVPFFAVSGSDFIEVYVGLGASRIRKLFNEAKQNAPCIIFIDEIETISHQRGSVNYSNSEHDQTLNQLLVEMDGFTKNIGVIVMAATNQPESLDLAVTRPGRFDRHFHITLPSVKDREAILKLHARNKKFNDDVDFESLAKQTPGFNGAQLEAILNESALLATRRNVLVICNEDISEALDRVLMGPSKKSKKYNDKEKRMVAYHESGHAVIGLKLPEADQIQKVTIIPRGNAGGYNLTLPQEETFFSSKKRLLAQITSFLGGRAAEEVVFQDVSNGAYSDFKYATEIAKKMVTQYGMSDLGPIQYMENNFYKNFSDSKAVEIDKEIQKIIDYCYQNAKKIITENRDLLDLISKYLLEIETITQKDLEEILNTGIIEWWEKDKLKKNLQKSEKEDCNK.

Residues 1–11 lie on the Cytoplasmic side of the membrane; the sequence is MKKNIKDIFKN. The chain crosses the membrane as a helical span at residues 12–32; it reads FNIFWFCFIFLLLSLLYCLIM. Over 33–178 the chain is Extracellular; sequence MEISHQHDNN…LQRIPYQPYF (146 aa). A helical transmembrane segment spans residues 179–199; the sequence is GFAPFISAVNICILIIIFYFI. Over 200–686 the chain is Cytoplasmic; sequence YNSIEKTSAQ…QKSEKEDCNK (487 aa). 272 to 279 lines the ATP pocket; the sequence is GPPGVGKT. Zn(2+) is bound at residue histidine 493. Residue glutamate 494 is part of the active site. Zn(2+)-binding residues include histidine 497 and aspartate 569.

In the central section; belongs to the AAA ATPase family. The protein in the C-terminal section; belongs to the peptidase M41 family. In terms of assembly, homohexamer. It depends on Zn(2+) as a cofactor.

The protein localises to the cell membrane. Its function is as follows. Acts as a processive, ATP-dependent zinc metallopeptidase for both cytoplasmic and membrane proteins. Plays a role in the quality control of integral membrane proteins. In Phytoplasma mali (strain AT), this protein is ATP-dependent zinc metalloprotease FtsH 2.